The following is a 286-amino-acid chain: NAD(P)H azoreductase (286 aa).

NADP(+) contacts are provided by residues 6 to 11, Arg-31, and 136 to 141; these read GGTGTI and GFFMQN.

The protein belongs to the NmrA-type oxidoreductase family. Azoreductase type 3 subfamily. As to quaternary structure, monomer.

Its function is as follows. Catalyzes the reductive cleavage of azo bond in aromatic azo compounds to the corresponding amines. Uses preferentially NADPH rather than NADH as an electron donor for its activity. The enzyme reductively cleaved Orange II and carboxy-Orange II, and can also reduce several sulfonated structural analogs, which carry a hydroxy group in the 2 position of the naphthol ring. The sequence is that of NAD(P)H azoreductase (azoB) from Xenophilus azovorans.